The sequence spans 123 residues: uncharacterized protein (123 aa).

This sequence to insertion element IS1016 transposase.

This is an uncharacterized protein from Haemophilus influenzae (strain ATCC 51907 / DSM 11121 / KW20 / Rd).